We begin with the raw amino-acid sequence, 553 residues long: Putative transport protein YidE (553 aa).

Transmembrane regions (helical) follow at residues 4-24 (IALT…IGNV), 28-48 (GVGL…HFVS), 65-85 (FGLI…FFAS), 95-115 (LFAV…HKLF), and 158-178 (MSYA…MWML). RCK C-terminal domains follow at residues 191-276 (QQHE…VIGQ) and 279-361 (DTSL…VLGN). A run of 6 helical transmembrane segments spans residues 371–391 (MLPV…PVFV), 393–413 (GFPA…ALIL), 439–459 (IVLF…HTLV), 464–484 (LSWI…VGIL), 493–513 (YLTM…LAFA), and 533–553 (LVMF…WSIG).

Belongs to the AAE transporter (TC 2.A.81) family. YidE subfamily.

It is found in the cell membrane. In Escherichia coli O6:H1 (strain CFT073 / ATCC 700928 / UPEC), this protein is Putative transport protein YidE.